The following is a 218-amino-acid chain: Hypoxanthine-guanine phosphoribosyltransferase (218 aa).

At alanine 2 the chain carries N-acetylalanine. Lysine 69 is a GMP binding site. Lysine 103 is subject to N6-acetyllysine. Lysine 115 is covalently cross-linked (Glycyl lysine isopeptide (Lys-Gly) (interchain with G-Cter in SUMO1); alternate). Lysine 115 participates in a covalent cross-link: Glycyl lysine isopeptide (Lys-Gly) (interchain with G-Cter in SUMO2); alternate. GMP-binding positions include 134-142 (EDIIDTGKT), lysine 166, 186-188 (KFV), and aspartate 194. Residue aspartate 138 is the Proton acceptor of the active site. Threonine 142 carries the post-translational modification Phosphothreonine. Aspartate 194 is a Mg(2+) binding site.

This sequence belongs to the purine/pyrimidine phosphoribosyltransferase family. In terms of assembly, homotetramer. The cofactor is Mg(2+).

It is found in the cytoplasm. It carries out the reaction IMP + diphosphate = hypoxanthine + 5-phospho-alpha-D-ribose 1-diphosphate. The catalysed reaction is GMP + diphosphate = guanine + 5-phospho-alpha-D-ribose 1-diphosphate. The protein operates within purine metabolism; IMP biosynthesis via salvage pathway; IMP from hypoxanthine: step 1/1. Functionally, converts guanine to guanosine monophosphate, and hypoxanthine to inosine monophosphate. Transfers the 5-phosphoribosyl group from 5-phosphoribosylpyrophosphate onto the purine. Plays a central role in the generation of purine nucleotides through the purine salvage pathway. The protein is Hypoxanthine-guanine phosphoribosyltransferase (HPRT1) of Canis lupus familiaris (Dog).